A 207-amino-acid polypeptide reads, in one-letter code: Mediator of RNA polymerase II transcription subunit 18 (207 aa).

It belongs to the Mediator complex subunit 18 family. Component of the Mediator complex. Interacts with med17, prk1 and rbp1.

The protein resides in the nucleus. Its function is as follows. Component of the Mediator complex, a coactivator involved in the regulated transcription of nearly all RNA polymerase II-dependent genes. Mediator functions as a bridge to convey information from gene-specific regulatory proteins to the basal RNA polymerase II transcription machinery. Mediator is recruited to promoters by direct interactions with regulatory proteins and serves as a scaffold for the assembly of a functional preinitiation complex with RNA polymerase II and the general transcription factors. The protein is Mediator of RNA polymerase II transcription subunit 18 (med18) of Schizosaccharomyces pombe (strain 972 / ATCC 24843) (Fission yeast).